A 434-amino-acid polypeptide reads, in one-letter code: UPF0597 protein CLD_2616 (434 aa).

This sequence belongs to the UPF0597 family.

This chain is UPF0597 protein CLD_2616, found in Clostridium botulinum (strain Okra / Type B1).